Reading from the N-terminus, the 194-residue chain is Adenylate kinase (194 aa).

12–17 (GSGKTT) provides a ligand contact to ATP. The NMP stretch occupies residues 34 to 63 (STGDLLREEVKKGTPLGATIASFIDNGQLV). AMP-binding positions include T35, R40, 61-63 (QLV), 88-91 (GFPR), and Q95. Positions 130–136 (GRARGAD) are LID. Residue R131 participates in ATP binding. 2 residues coordinate AMP: R133 and R145. ATP is bound at residue R173.

This sequence belongs to the adenylate kinase family. Monomer.

The protein localises to the cytoplasm. It catalyses the reaction AMP + ATP = 2 ADP. It participates in purine metabolism; AMP biosynthesis via salvage pathway; AMP from ADP: step 1/1. Functionally, catalyzes the reversible transfer of the terminal phosphate group between ATP and AMP. Plays an important role in cellular energy homeostasis and in adenine nucleotide metabolism. This chain is Adenylate kinase, found in Nitratiruptor sp. (strain SB155-2).